A 152-amino-acid polypeptide reads, in one-letter code: VQ motif-containing protein 8, chloroplastic (152 aa).

The interval Met-1 to Ala-42 is disordered. The transit peptide at Met-1 to Arg-58 directs the protein to the chloroplast. A VQ motif is present at residues Phe-62–Gly-71. Residues Thr-80 to Thr-108 form a disordered region. A compositionally biased stretch (low complexity) spans Ser-81–Val-92.

It is found in the plastid. It localises to the chloroplast. In terms of biological role, may be involved in chloroplast development. The protein is VQ motif-containing protein 8, chloroplastic of Arabidopsis thaliana (Mouse-ear cress).